Consider the following 177-residue polypeptide: Large ribosomal subunit protein uL6 (177 aa).

It belongs to the universal ribosomal protein uL6 family. Part of the 50S ribosomal subunit.

Its function is as follows. This protein binds to the 23S rRNA, and is important in its secondary structure. It is located near the subunit interface in the base of the L7/L12 stalk, and near the tRNA binding site of the peptidyltransferase center. In Methanocella arvoryzae (strain DSM 22066 / NBRC 105507 / MRE50), this protein is Large ribosomal subunit protein uL6.